Consider the following 502-residue polypeptide: Rab11 family-interacting protein 4B (502 aa).

Disordered regions lie at residues 1–49 and 71–98; these read MSIQ…EEGI and SALS…TTSS. Residues 15–29 are compositionally biased toward basic and acidic residues; it reads EEGRGVERDSDRDSA. A compositionally biased stretch (polar residues) spans 71-80; it reads SALSSASLNE. Acidic residues predominate over residues 81–93; sequence EQFEDYGEGEDGD. Residues 228-482 adopt a coiled-coil conformation; it reads DVKTKLKQEN…EEINLRLRQY (255 aa). Residues 439 to 501 form the FIP-RBD domain; sequence EAKNLFATQT…DHNPSILEIK (63 aa).

In terms of assembly, homodimer. Forms a complex with Rab11 (rab11a or rab11b) and arf6.

The protein localises to the recycling endosome membrane. Its subcellular location is the cleavage furrow. The protein resides in the midbody. It localises to the cytoplasmic vesicle. Its function is as follows. Acts as a regulator of endocytic traffic by participating in membrane delivery. Required for the abscission step in cytokinesis, possibly by acting as an 'address tag' delivering recycling endosome membranes to the cleavage furrow during late cytokinesis. This Danio rerio (Zebrafish) protein is Rab11 family-interacting protein 4B (rab11fip4b).